The chain runs to 1024 residues: Multidrug resistance protein MdtC (1024 aa).

12 consecutive transmembrane segments (helical) span residues 12-32 (VATT…FSLL), 333-353 (EVER…FIFL), 360-380 (LIPA…MYLC), 387-407 (LSLM…IVVL), 435-455 (VLSM…MAGL), 469-489 (VAIG…CAWL), 528-548 (WVMV…ISIP), 853-873 (LWLI…LYES), 875-895 (VHPL…LLAL), 897-917 (LFDA…IGIV), 953-973 (PIIM…LSSG), and 984-1004 (ITIV…TPVI).

The protein belongs to the resistance-nodulation-cell division (RND) (TC 2.A.6) family. MdtC subfamily. As to quaternary structure, part of a tripartite efflux system composed of MdtA, MdtB and MdtC. MdtC forms a heteromultimer with MdtB.

The protein resides in the cell inner membrane. In Yersinia pseudotuberculosis serotype O:1b (strain IP 31758), this protein is Multidrug resistance protein MdtC.